Reading from the N-terminus, the 155-residue chain is Protein-export protein SecB (155 aa).

Belongs to the SecB family. Homotetramer, a dimer of dimers. One homotetramer interacts with 1 SecA dimer.

The protein resides in the cytoplasm. Functionally, one of the proteins required for the normal export of preproteins out of the cell cytoplasm. It is a molecular chaperone that binds to a subset of precursor proteins, maintaining them in a translocation-competent state. It also specifically binds to its receptor SecA. The chain is Protein-export protein SecB from Escherichia coli O139:H28 (strain E24377A / ETEC).